Reading from the N-terminus, the 310-residue chain is HPr kinase/phosphorylase (310 aa).

Active-site residues include H138 and K159. 153–160 (GDSGIGKS) is a binding site for ATP. S160 contributes to the Mg(2+) binding site. D177 acts as the Proton acceptor; for phosphorylation activity. Proton donor; for dephosphorylation activity in catalysis. Residues 201-210 (LEIRGVGIID) are important for the catalytic mechanism of both phosphorylation and dephosphorylation. Residue E202 participates in Mg(2+) binding. R243 is a catalytic residue. Positions 264–269 (PVKTGR) are important for the catalytic mechanism of dephosphorylation.

This sequence belongs to the HPrK/P family. In terms of assembly, homohexamer. Requires Mg(2+) as cofactor.

It carries out the reaction [HPr protein]-L-serine + ATP = [HPr protein]-O-phospho-L-serine + ADP + H(+). The catalysed reaction is [HPr protein]-O-phospho-L-serine + phosphate + H(+) = [HPr protein]-L-serine + diphosphate. Functionally, catalyzes the ATP- as well as the pyrophosphate-dependent phosphorylation of a specific serine residue in HPr, a phosphocarrier protein of the phosphoenolpyruvate-dependent sugar phosphotransferase system (PTS). HprK/P also catalyzes the pyrophosphate-producing, inorganic phosphate-dependent dephosphorylation (phosphorolysis) of seryl-phosphorylated HPr (P-Ser-HPr). The two antagonistic activities of HprK/P are regulated by several intracellular metabolites, which change their concentration in response to the absence or presence of rapidly metabolisable carbon sources (glucose, fructose, etc.) in the growth medium. Therefore, by controlling the phosphorylation state of HPr, HPrK/P is a sensor enzyme that plays a major role in the regulation of carbon metabolism and sugar transport: it mediates carbon catabolite repression (CCR), and regulates PTS-catalyzed carbohydrate uptake and inducer exclusion. This chain is HPr kinase/phosphorylase, found in Streptococcus uberis (strain ATCC BAA-854 / 0140J).